Here is a 199-residue protein sequence, read N- to C-terminus: Holliday junction branch migration complex subunit RuvA (199 aa).

The interval 1-63 (MIGCLIGEVF…EDAQQLYGFS (63 aa)) is domain I. The interval 64–142 (DAQEKTIFRT…TLAQGTSSAA (79 aa)) is domain II. Positions 143–150 (ALPQIQFV) are flexible linker. The interval 150-199 (VSNSPVAEAEAALQSLGYKPLEAQKAVAAVKADYTESADIIRAALKSMMK) is domain III.

The protein belongs to the RuvA family. In terms of assembly, homotetramer. Forms an RuvA(8)-RuvB(12)-Holliday junction (HJ) complex. HJ DNA is sandwiched between 2 RuvA tetramers; dsDNA enters through RuvA and exits via RuvB. An RuvB hexamer assembles on each DNA strand where it exits the tetramer. Each RuvB hexamer is contacted by two RuvA subunits (via domain III) on 2 adjacent RuvB subunits; this complex drives branch migration. In the full resolvosome a probable DNA-RuvA(4)-RuvB(12)-RuvC(2) complex forms which resolves the HJ.

It localises to the cytoplasm. Functionally, the RuvA-RuvB-RuvC complex processes Holliday junction (HJ) DNA during genetic recombination and DNA repair, while the RuvA-RuvB complex plays an important role in the rescue of blocked DNA replication forks via replication fork reversal (RFR). RuvA specifically binds to HJ cruciform DNA, conferring on it an open structure. The RuvB hexamer acts as an ATP-dependent pump, pulling dsDNA into and through the RuvAB complex. HJ branch migration allows RuvC to scan DNA until it finds its consensus sequence, where it cleaves and resolves the cruciform DNA. The protein is Holliday junction branch migration complex subunit RuvA of Acinetobacter baumannii (strain SDF).